A 652-amino-acid polypeptide reads, in one-letter code: Phosphoglucomutase 1, chloroplastic (652 aa).

Residues 1–84 constitute a chloroplast transit peptide; sequence MAFSAAASAS…LAARRTLRVR (84 aa). Residues R118 and S211 each contribute to the alpha-D-glucose 1,6-bisphosphate site. S211 functions as the Phosphoserine intermediate in the catalytic mechanism. Mg(2+) is bound by residues S211, D376, D378, and D380. Residue S211 is modified to Phosphoserine. Positions 380, 381, 443, 462, 464, and 475 each coordinate alpha-D-glucose 1,6-bisphosphate.

This sequence belongs to the phosphohexose mutase family. Requires Mg(2+) as cofactor.

The protein localises to the plastid. It is found in the chloroplast. The catalysed reaction is alpha-D-glucose 1-phosphate = alpha-D-glucose 6-phosphate. The enzyme catalyses O-phospho-L-seryl-[protein] + alpha-D-glucose 1-phosphate = alpha-D-glucose 1,6-bisphosphate + L-seryl-[protein]. It catalyses the reaction alpha-D-glucose 1,6-bisphosphate + L-seryl-[protein] = O-phospho-L-seryl-[protein] + alpha-D-glucose 6-phosphate. With respect to regulation, inhibited by the Calvin cycle intermediates fructose-1,6-bisphosphate and ribulose-1,5-bisphosphate. Its function is as follows. Catalyzes the reversible isomerization of alpha-D-glucose 1-phosphate to alpha-D-glucose 6-phosphate. The mechanism proceeds via the intermediate compound alpha-D-glucose 1,6-bisphosphate. This enzyme participates in both the breakdown and synthesis of glucose. Required for sucrose production and accumulation necessary during plant development. Promotes gravitropic responses, negative in shoots but positive in roots, by facilitating starch granules (statoliths) formation. In Marchantia polymorpha (Common liverwort), this protein is Phosphoglucomutase 1, chloroplastic.